A 337-amino-acid chain; its full sequence is Putative carboxypeptidase TP_0688 (337 aa).

S118 serves as the catalytic Nucleophile. Catalysis depends on charge relay system residues E234 and H302.

This sequence belongs to the peptidase S66 family.

In Treponema pallidum (strain Nichols), this protein is Putative carboxypeptidase TP_0688.